A 133-amino-acid chain; its full sequence is Holo-[acyl-carrier-protein] synthase (133 aa).

Positions 8 and 58 each coordinate Mg(2+).

The protein belongs to the P-Pant transferase superfamily. AcpS family. It depends on Mg(2+) as a cofactor.

Its subcellular location is the cytoplasm. It catalyses the reaction apo-[ACP] + CoA = holo-[ACP] + adenosine 3',5'-bisphosphate + H(+). In terms of biological role, transfers the 4'-phosphopantetheine moiety from coenzyme A to a Ser of acyl-carrier-protein. This is Holo-[acyl-carrier-protein] synthase from Erythrobacter litoralis (strain HTCC2594).